The chain runs to 1492 residues: MFNSFQQQGTIQPQGTGYYPTQQGQQGQQGQQGQQGQQGQQGQQQQSFQSQPPFNSYVQQPNAGIGGFPQGQSSFGNTSQMTNQPSSGFTSGQYAGGSNANSNLFNQSSQQFGGVGNNNVNVNQSSDPSSLLPQGGSYNNAGLQRPQLQPVQSVQSVHSMHSLGPAQTMSSINPIQSQTGDYYGNALSQQQSRTSLMSTSSQMGGNQLYDTNSQILQPQQQQQQQQQNIQVTAPLQQQSTGLYSSASQPAQAANLQPQQTGFYSQQPLQPQQTGFYAQQSQVPLEPLKPTATGFVNSFANNGINNDIKIPTMRLSFITAQDQAKFETLFRSRVSKGSNTISGDNCRAILMKSGLQPKQLAKIWTLCDTSKAGELLFPEFALAMHLVNEVLQGDSIPYELDIKSKNEVNSFIDAINMSIVSGSTEEPAKQATPFDSLFTNGLSVLQPQATGMIPATSFGVPLQNQMTGGMLNPQATGMMPQTSFGMPMQVTGGPLLSQTTGGALQPQTTGFMPSTSFGMPLQTQITGGAMMPNLQPQTTGSMMPNLQPQTTGSMMPNLQPQTTGSMMPNLQSQTTGSMMPNLQSQMTGSMGVGTTSFGMQPQATGNISLQPNPTGFLPVSNFNPTAPLTAQKTGFGNNEIYSQRNFGSSLGQAEEDSISTEEKSLFYKIFETYDSQKKGLLDSPTAVEIFRKSGLNRSDLEHIWNLCDINNRGQLSKQEFALGMHLVYRKLNGKILPNRLPPSLIPSSNKILDNVKNQLKVASTSNDTKKAPSRTDGLSYKNNDDENILPSFRNRRKNYSTNGTSSSSLDNTPRGSPVTVSGANVSSDTGVTTAVTTSSAPVAPVASAVVKDGRIDMLQKSIREKRGQLEAEISRNRRMLNQSAENRENDMRMIGSLKDKIANVPHILYTKNSSIPDDLNRRIDTIVSRIPVLFSEIADIEFAISNSKIELYKLQNPSSIIGSGPHGEITDEDRKKARSKALLKSRMAALTGKAEEAGNSIEEEEARYNKAVANIRNESRKNRGIIGDIRGSISELSASLMSTLTGGAAGQNTSEFEKWEFGVGLEKEVRTFIETLKSGGILSGSSLSTETNLNDKEDERVQYLKDQAQRKMEQKLAELGINKPAESPSQQSLSSPSQMEAQATPVKSPFQETQHADERSEDSEDEEEKRLREELERIKLKKKADKEKRLAELRRQVQDAQAESDDGFSSSVSGSNNGNVLAPQVEGTVGHVEYPAVPSAANPVSSVSASMSGSSTPVQGTSAAARNPFFKSTDSSNSTSGLSDLKAAEAQRRSQRGLDDDADAWSDDEPSPVAPAPVAPAPVAPAPVAPAPVAPAPVAPAPVAPAPVAPAPAPVAPSPVAPVPVAPSPVAPAPVAPSPVAPVPVAPSPAAPQPSNLPPVPIAPPLPQVQGVPQPVVPLAPPLPQVKQEEQGNFLAPPPSLPHMDNIQNSQNLDSHSDQDDVLSIPDSVASEDELGDEPGLPPSGIPPPPPLP.

The span at 1 to 54 (MFNSFQQQGTIQPQGTGYYPTQQGQQGQQGQQGQQGQQGQQGQQQQSFQSQPPF) shows a compositional bias: low complexity. Disordered regions lie at residues 1 to 175 (MFNS…INPI) and 240 to 259 (TGLY…QPQQ). Residues 70-104 (QGQSSFGNTSQMTNQPSSGFTSGQYAGGSNANSNL) show a composition bias toward polar residues. A compositionally biased stretch (low complexity) spans 105 to 126 (FNQSSQQFGGVGNNNVNVNQSS). The span at 127 to 142 (DPSSLLPQGGSYNNAG) shows a compositional bias: polar residues. Over residues 146–163 (PQLQPVQSVQSVHSMHSL) the composition is skewed to low complexity. Positions 165–175 (PAQTMSSINPI) are enriched in polar residues. The segment covering 244-259 (SSASQPAQAANLQPQQ) has biased composition (low complexity). EH domains are found at residues 321-410 (DQAK…VNSF) and 661-750 (EKSL…SNKI). EF-hand domains are found at residues 354-389 (LQPK…VNEV) and 694-729 (LNRS…VYRK). The interval 761–828 (ASTSNDTKKA…VSGANVSSDT (68 aa)) is disordered. The segment covering 798-823 (YSTNGTSSSSLDNTPRGSPVTVSGAN) has biased composition (polar residues). Coiled-coil stretches lie at residues 982-1022 (LKSR…RKNR) and 1098-1207 (ERVQ…DDGF). Disordered regions lie at residues 1120–1225 (INKP…PQVE) and 1237–1492 (PSAA…PPLP). A compositionally biased stretch (low complexity) spans 1126–1137 (SPSQQSLSSPSQ). Basic and acidic residues predominate over residues 1167 to 1196 (EKRLREELERIKLKKKADKEKRLAELRRQV). 3 stretches are compositionally biased toward low complexity: residues 1206-1219 (GFSS…NGNV), 1237-1257 (PSAA…STPV), and 1271-1284 (STDS…LSDL). Basic and acidic residues predominate over residues 1285–1298 (KAAEAQRRSQRGLD). Residues 1299-1309 (DDADAWSDDEP) show a composition bias toward acidic residues. 3 stretches are compositionally biased toward pro residues: residues 1311–1406 (PVAP…PPLP), 1414–1423 (PVVPLAPPLP), and 1479–1492 (GLPP…PPLP).

It belongs to the PAN1 family. In terms of assembly, component of the PAN1 actin cytoskeleton-regulatory complex.

It localises to the cell membrane. The protein localises to the endosome membrane. It is found in the cytoplasm. The protein resides in the cytoskeleton. Its subcellular location is the actin patch. Component of the PAN1 actin cytoskeleton-regulatory complex required for the internalization of endosomes during actin-coupled endocytosis. The complex links the site of endocytosis to the cell membrane-associated actin cytoskeleton. Mediates uptake of external molecules and vacuolar degradation of plasma membrane proteins. Plays a role in the proper organization of the cell membrane-associated actin cytoskeleton and promotes its destabilization. The protein is Actin cytoskeleton-regulatory complex protein PAN1 (PAN1) of Vanderwaltozyma polyspora (strain ATCC 22028 / DSM 70294 / BCRC 21397 / CBS 2163 / NBRC 10782 / NRRL Y-8283 / UCD 57-17) (Kluyveromyces polysporus).